Consider the following 276-residue polypeptide: NH(3)-dependent NAD(+) synthetase (276 aa).

43–50 provides a ligand contact to ATP; sequence GISGGVDS. Mg(2+) is bound at residue Asp49. Arg146 is a deamido-NAD(+) binding site. Residue Thr166 coordinates ATP. Residue Glu171 coordinates Mg(2+). Residues Lys179 and Asp186 each coordinate deamido-NAD(+). Lys195 and Thr217 together coordinate ATP. 266-267 provides a ligand contact to deamido-NAD(+); that stretch reads HK.

The protein belongs to the NAD synthetase family. Homodimer.

It carries out the reaction deamido-NAD(+) + NH4(+) + ATP = AMP + diphosphate + NAD(+) + H(+). It functions in the pathway cofactor biosynthesis; NAD(+) biosynthesis; NAD(+) from deamido-NAD(+) (ammonia route): step 1/1. Its function is as follows. Catalyzes the ATP-dependent amidation of deamido-NAD to form NAD. Uses ammonia as a nitrogen source. In Shewanella sediminis (strain HAW-EB3), this protein is NH(3)-dependent NAD(+) synthetase.